A 300-amino-acid polypeptide reads, in one-letter code: Cation-efflux pump FieF (300 aa).

6 consecutive transmembrane segments (helical) span residues 12–32, 39–59, 82–102, 114–134, 151–171, and 172–192; these read AAIA…FAWW, ILAA…NLLV, AALA…LTGI, PGVG…LVSF, MLHY…LALS, and WYGW…YILY. Asp-45 and Asp-49 together coordinate Zn(2+). Zn(2+) contacts are provided by His-153 and Asp-157.

This sequence belongs to the cation diffusion facilitator (CDF) transporter (TC 2.A.4) family. FieF subfamily. In terms of assembly, homodimer.

It is found in the cell inner membrane. The catalysed reaction is Zn(2+)(in) + H(+)(out) = Zn(2+)(out) + H(+)(in). The enzyme catalyses Cd(2+)(in) + H(+)(out) = Cd(2+)(out) + H(+)(in). It catalyses the reaction Fe(2+)(in) + H(+)(out) = Fe(2+)(out) + H(+)(in). Functionally, divalent metal cation transporter which exports Zn(2+), Cd(2+) and possibly Fe(2+). May be involved in zinc and iron detoxification by efflux. The polypeptide is Cation-efflux pump FieF (Escherichia fergusonii (strain ATCC 35469 / DSM 13698 / CCUG 18766 / IAM 14443 / JCM 21226 / LMG 7866 / NBRC 102419 / NCTC 12128 / CDC 0568-73)).